Here is a 333-residue protein sequence, read N- to C-terminus: Adenosine deaminase (333 aa).

Positions 12 and 14 each coordinate Zn(2+). 3 residues coordinate substrate: His14, Asp16, and Gly170. His197 contacts Zn(2+). Catalysis depends on Glu200, which acts as the Proton donor. Asp278 provides a ligand contact to Zn(2+). Residue Asp279 coordinates substrate.

This sequence belongs to the metallo-dependent hydrolases superfamily. Adenosine and AMP deaminases family. Adenosine deaminase subfamily. Zn(2+) is required as a cofactor.

It catalyses the reaction adenosine + H2O + H(+) = inosine + NH4(+). It carries out the reaction 2'-deoxyadenosine + H2O + H(+) = 2'-deoxyinosine + NH4(+). Its function is as follows. Catalyzes the hydrolytic deamination of adenosine and 2-deoxyadenosine. In Aliivibrio fischeri (strain ATCC 700601 / ES114) (Vibrio fischeri), this protein is Adenosine deaminase.